We begin with the raw amino-acid sequence, 313 residues long: Aspartate carbamoyltransferase catalytic subunit (313 aa).

The carbamoyl phosphate site is built by Arg-59 and Thr-60. Residue Lys-87 coordinates L-aspartate. Carbamoyl phosphate contacts are provided by Arg-109, His-137, and Gln-140. L-aspartate-binding residues include Arg-170 and Arg-224. Gly-265 and Pro-266 together coordinate carbamoyl phosphate.

This sequence belongs to the aspartate/ornithine carbamoyltransferase superfamily. ATCase family. Heterododecamer (2C3:3R2) of six catalytic PyrB chains organized as two trimers (C3), and six regulatory PyrI chains organized as three dimers (R2).

It catalyses the reaction carbamoyl phosphate + L-aspartate = N-carbamoyl-L-aspartate + phosphate + H(+). Its pathway is pyrimidine metabolism; UMP biosynthesis via de novo pathway; (S)-dihydroorotate from bicarbonate: step 2/3. Functionally, catalyzes the condensation of carbamoyl phosphate and aspartate to form carbamoyl aspartate and inorganic phosphate, the committed step in the de novo pyrimidine nucleotide biosynthesis pathway. The chain is Aspartate carbamoyltransferase catalytic subunit from Agrobacterium fabrum (strain C58 / ATCC 33970) (Agrobacterium tumefaciens (strain C58)).